Reading from the N-terminus, the 510-residue chain is Beta-glucosidase 34 (510 aa).

Positions 1-26 (MGNGGRCMVEVVILLVLMAMSQGCDA) are cleaved as a signal peptide. Asparagine 28 carries N-linked (GlcNAc...) asparagine glycosylation. Glutamine 52 is a binding site for a beta-D-glucoside. The N-linked (GlcNAc...) asparagine glycan is linked to asparagine 120. Residues histidine 153 and 198–199 (NE) contribute to the a beta-D-glucoside site. Glutamate 199 functions as the Proton donor in the catalytic mechanism. The cysteines at positions 218 and 226 are disulfide-linked. N-linked (GlcNAc...) asparagine glycans are attached at residues asparagine 279 and asparagine 331. Tyrosine 342 lines the a beta-D-glucoside pocket. The N-linked (GlcNAc...) asparagine glycan is linked to asparagine 360. Residues glutamate 415, tryptophan 465, 472 to 473 (EW), and phenylalanine 481 each bind a beta-D-glucoside. Glutamate 415 serves as the catalytic Nucleophile.

It belongs to the glycosyl hydrolase 1 family.

The catalysed reaction is Hydrolysis of terminal, non-reducing beta-D-glucosyl residues with release of beta-D-glucose.. This chain is Beta-glucosidase 34 (BGLU34), found in Oryza sativa subsp. japonica (Rice).